Consider the following 287-residue polypeptide: uncharacterized protein (287 aa).

This is an uncharacterized protein from Mycoplasma genitalium (strain ATCC 33530 / DSM 19775 / NCTC 10195 / G37) (Mycoplasmoides genitalium).